Here is a 491-residue protein sequence, read N- to C-terminus: Cobyric acid synthase (491 aa).

A GATase cobBQ-type domain is found at 250-439; it reads EVTIAVIRLP…LHGIFDNGAW (190 aa). C331 serves as the catalytic Nucleophile. The active site involves H431.

This sequence belongs to the CobB/CobQ family. CobQ subfamily.

Its pathway is cofactor biosynthesis; adenosylcobalamin biosynthesis. Functionally, catalyzes amidations at positions B, D, E, and G on adenosylcobyrinic A,C-diamide. NH(2) groups are provided by glutamine, and one molecule of ATP is hydrogenolyzed for each amidation. This Synechococcus elongatus (strain ATCC 33912 / PCC 7942 / FACHB-805) (Anacystis nidulans R2) protein is Cobyric acid synthase.